Reading from the N-terminus, the 318-residue chain is Acetyl-coenzyme A carboxylase carboxyl transferase subunit alpha (318 aa).

Residues 38 to 292 (KLEKRLAKLE…NKTITKSLHA (255 aa)) enclose the CoA carboxyltransferase C-terminal domain.

It belongs to the AccA family. Acetyl-CoA carboxylase is a heterohexamer composed of biotin carboxyl carrier protein (AccB), biotin carboxylase (AccC) and two subunits each of ACCase subunit alpha (AccA) and ACCase subunit beta (AccD).

The protein resides in the cytoplasm. The enzyme catalyses N(6)-carboxybiotinyl-L-lysyl-[protein] + acetyl-CoA = N(6)-biotinyl-L-lysyl-[protein] + malonyl-CoA. Its pathway is lipid metabolism; malonyl-CoA biosynthesis; malonyl-CoA from acetyl-CoA: step 1/1. In terms of biological role, component of the acetyl coenzyme A carboxylase (ACC) complex. First, biotin carboxylase catalyzes the carboxylation of biotin on its carrier protein (BCCP) and then the CO(2) group is transferred by the carboxyltransferase to acetyl-CoA to form malonyl-CoA. The polypeptide is Acetyl-coenzyme A carboxylase carboxyl transferase subunit alpha (Listeria monocytogenes serovar 1/2a (strain ATCC BAA-679 / EGD-e)).